Consider the following 465-residue polypeptide: Respiratory transcription factor ZNF1 (465 aa).

A DNA-binding region (zn(2)-C6 fungal-type) is located at residues 8-34; the sequence is CDCCCIRRVKCDRKKPCKCCLQHNLQC.

The protein belongs to the MAL13 family.

The protein localises to the nucleus. Functionally, transcription factor that regulates respiratory growth and plays a critical role in stress adaptation during non-fermentative growth. Binds to promoters of genes involved in non-fermentative metabolism, including processes such as gluconeogenesis (PCK1, FBP1 and MDH2), glyoxylate shunt (MLS1 and ICL1) and the tricarboxylic acid cycle (ACO1). Plays a role in maintaining mitochondrial morphology and function. Also plays a role in tolerance to pH and osmotic stress, especially during the oxidative metabolism. This is Respiratory transcription factor ZNF1 from Saccharomyces cerevisiae (strain ATCC 204508 / S288c) (Baker's yeast).